The following is a 94-amino-acid chain: Co-chaperonin GroES (94 aa).

It belongs to the GroES chaperonin family. In terms of assembly, heptamer of 7 subunits arranged in a ring. Interacts with the chaperonin GroEL.

Its subcellular location is the cytoplasm. Together with the chaperonin GroEL, plays an essential role in assisting protein folding. The GroEL-GroES system forms a nano-cage that allows encapsulation of the non-native substrate proteins and provides a physical environment optimized to promote and accelerate protein folding. GroES binds to the apical surface of the GroEL ring, thereby capping the opening of the GroEL channel. In Lactobacillus delbrueckii subsp. bulgaricus (strain ATCC BAA-365 / Lb-18), this protein is Co-chaperonin GroES.